The chain runs to 624 residues: Probable potassium transport system protein Kup 1 (624 aa).

The next 12 membrane-spanning stretches (helical) occupy residues 10–30 (LALG…LYAL), 48–68 (LSLI…MIIF), 94–114 (PLFY…GMLT), 133–153 (LYPY…SLQA), 159–179 (IGYL…ILGI), 210–230 (FLLG…ADIG), 242–262 (FFIA…NLIV), 270–290 (PFFM…ATVA), 331–351 (IYVP…CLAF), 363–383 (IAVN…AVSI), 388–408 (TFNV…FLGA), and 413–433 (FITG…IMYS).

The protein belongs to the HAK/KUP transporter (TC 2.A.72) family.

Its subcellular location is the cell inner membrane. It catalyses the reaction K(+)(in) + H(+)(in) = K(+)(out) + H(+)(out). Transport of potassium into the cell. Likely operates as a K(+):H(+) symporter. The chain is Probable potassium transport system protein Kup 1 from Legionella pneumophila subsp. pneumophila (strain Philadelphia 1 / ATCC 33152 / DSM 7513).